Consider the following 378-residue polypeptide: Transcription elongation factor TFIIS (378 aa).

Residue methionine 1 is modified to N-acetylmethionine. Positions 10–89 constitute a TFIIS N-terminal domain; it reads EGAKKAADAA…EIWKKVVIEE (80 aa). The 124-residue stretch at 210 to 333 folds into the TFIIS central domain; it reads VRDKIRELLV…DCERGLAAKA (124 aa). Residues 336–376 form a TFIIS-type zinc finger; that stretch reads DQFKCGRCGQRKCTYYQMQTRSADEPMTTYVTCVNCDNHWK. Positions 340, 343, 368, and 371 each coordinate Zn(2+).

As to expression, expressed in roots, leaves and flowers.

Its subcellular location is the nucleus. Functionally, necessary for efficient RNA polymerase II transcription elongation past template-encoded arresting sites. Involved in the control of seed dormancy and germination. The chain is Transcription elongation factor TFIIS from Arabidopsis thaliana (Mouse-ear cress).